The sequence spans 152 residues: Large-conductance mechanosensitive channel (152 aa).

3 helical membrane passes run 21-41 (IDLA…DSLV), 44-64 (VVMP…NKFL), and 92-112 (GNFI…FWMV).

It belongs to the MscL family. Homopentamer.

It localises to the cell inner membrane. Channel that opens in response to stretch forces in the membrane lipid bilayer. May participate in the regulation of osmotic pressure changes within the cell. This Bordetella pertussis (strain Tohama I / ATCC BAA-589 / NCTC 13251) protein is Large-conductance mechanosensitive channel.